We begin with the raw amino-acid sequence, 359 residues long: Queuine tRNA-ribosyltransferase (359 aa).

Asp-92 acts as the Proton acceptor in catalysis. Substrate-binding positions include 92-96, Asp-146, Gln-189, and Gly-216; that span reads DSGGF. The interval 245–251 is RNA binding; the sequence is GVGKPAD. Asp-264 acts as the Nucleophile in catalysis. Residues 269-273 are RNA binding; important for wobble base 34 recognition; it reads TRSGR. Cys-302, Cys-304, Cys-307, and His-333 together coordinate Zn(2+).

The protein belongs to the queuine tRNA-ribosyltransferase family. Homodimer. Within each dimer, one monomer is responsible for RNA recognition and catalysis, while the other monomer binds to the replacement base PreQ1. It depends on Zn(2+) as a cofactor.

The catalysed reaction is 7-aminomethyl-7-carbaguanine + guanosine(34) in tRNA = 7-aminomethyl-7-carbaguanosine(34) in tRNA + guanine. It participates in tRNA modification; tRNA-queuosine biosynthesis. In terms of biological role, catalyzes the base-exchange of a guanine (G) residue with the queuine precursor 7-aminomethyl-7-deazaguanine (PreQ1) at position 34 (anticodon wobble position) in tRNAs with GU(N) anticodons (tRNA-Asp, -Asn, -His and -Tyr). Catalysis occurs through a double-displacement mechanism. The nucleophile active site attacks the C1' of nucleotide 34 to detach the guanine base from the RNA, forming a covalent enzyme-RNA intermediate. The proton acceptor active site deprotonates the incoming PreQ1, allowing a nucleophilic attack on the C1' of the ribose to form the product. After dissociation, two additional enzymatic reactions on the tRNA convert PreQ1 to queuine (Q), resulting in the hypermodified nucleoside queuosine (7-(((4,5-cis-dihydroxy-2-cyclopenten-1-yl)amino)methyl)-7-deazaguanosine). This is Queuine tRNA-ribosyltransferase from Rickettsia bellii (strain RML369-C).